The primary structure comprises 450 residues: Phosphoglucosamine mutase (450 aa).

Catalysis depends on Ser-101, which acts as the Phosphoserine intermediate. Residues Ser-101, Asp-241, Asp-243, and Asp-245 each contribute to the Mg(2+) site. The residue at position 101 (Ser-101) is a Phosphoserine.

It belongs to the phosphohexose mutase family. Mg(2+) is required as a cofactor. Activated by phosphorylation.

It catalyses the reaction alpha-D-glucosamine 1-phosphate = D-glucosamine 6-phosphate. Its function is as follows. Catalyzes the conversion of glucosamine-6-phosphate to glucosamine-1-phosphate. In Listeria innocua serovar 6a (strain ATCC BAA-680 / CLIP 11262), this protein is Phosphoglucosamine mutase.